Here is a 176-residue protein sequence, read N- to C-terminus: Shikimate kinase (176 aa).

Position 14–19 (14–19 (GAGKSS)) interacts with ATP. Residue S18 coordinates Mg(2+). Residues D36, R60, and G82 each coordinate substrate. R120 serves as a coordination point for ATP. Position 138 (R138) interacts with substrate.

It belongs to the shikimate kinase family. Monomer. Requires Mg(2+) as cofactor.

It is found in the cytoplasm. The enzyme catalyses shikimate + ATP = 3-phosphoshikimate + ADP + H(+). The protein operates within metabolic intermediate biosynthesis; chorismate biosynthesis; chorismate from D-erythrose 4-phosphate and phosphoenolpyruvate: step 5/7. Functionally, catalyzes the specific phosphorylation of the 3-hydroxyl group of shikimic acid using ATP as a cosubstrate. This Dehalococcoides mccartyi (strain ATCC BAA-2266 / KCTC 15142 / 195) (Dehalococcoides ethenogenes (strain 195)) protein is Shikimate kinase.